The following is a 123-amino-acid chain: Small ribosomal subunit protein uS12 (123 aa).

Position 89 is a 3-methylthioaspartic acid (D89). Residues 101–123 (SLDTSGVKDRKQGRSKYGAKRPK) form a disordered region. A compositionally biased stretch (basic residues) spans 113-123 (GRSKYGAKRPK).

It belongs to the universal ribosomal protein uS12 family. In terms of assembly, part of the 30S ribosomal subunit. Contacts proteins S8 and S17. May interact with IF1 in the 30S initiation complex.

With S4 and S5 plays an important role in translational accuracy. In terms of biological role, interacts with and stabilizes bases of the 16S rRNA that are involved in tRNA selection in the A site and with the mRNA backbone. Located at the interface of the 30S and 50S subunits, it traverses the body of the 30S subunit contacting proteins on the other side and probably holding the rRNA structure together. The combined cluster of proteins S8, S12 and S17 appears to hold together the shoulder and platform of the 30S subunit. This Azotobacter vinelandii (strain DJ / ATCC BAA-1303) protein is Small ribosomal subunit protein uS12.